The following is a 723-amino-acid chain: Catalase-peroxidase (723 aa).

Residues 97–225 (WHAAGSYRVT…LAAVQMGLIY (129 aa)) constitute a cross-link (tryptophyl-tyrosyl-methioninium (Trp-Tyr) (with M-251)). The active-site Proton acceptor is His-98. Residues 225–251 (YVNPEGVNGKSDPLATAAQMRETFARM) constitute a cross-link (tryptophyl-tyrosyl-methioninium (Tyr-Met) (with W-97)). His-266 provides a ligand contact to heme b.

It belongs to the peroxidase family. Peroxidase/catalase subfamily. As to quaternary structure, homodimer or homotetramer. Requires heme b as cofactor. Post-translationally, formation of the three residue Trp-Tyr-Met cross-link is important for the catalase, but not the peroxidase activity of the enzyme.

The enzyme catalyses H2O2 + AH2 = A + 2 H2O. It carries out the reaction 2 H2O2 = O2 + 2 H2O. In terms of biological role, bifunctional enzyme with both catalase and broad-spectrum peroxidase activity. The protein is Catalase-peroxidase of Agrobacterium fabrum (strain C58 / ATCC 33970) (Agrobacterium tumefaciens (strain C58)).